Here is a 93-residue protein sequence, read N- to C-terminus: Co-chaperonin GroES (93 aa).

Belongs to the GroES chaperonin family. Heptamer of 7 subunits arranged in a ring. Interacts with the chaperonin GroEL.

It localises to the cytoplasm. In terms of biological role, together with the chaperonin GroEL, plays an essential role in assisting protein folding. The GroEL-GroES system forms a nano-cage that allows encapsulation of the non-native substrate proteins and provides a physical environment optimized to promote and accelerate protein folding. GroES binds to the apical surface of the GroEL ring, thereby capping the opening of the GroEL channel. The chain is Co-chaperonin GroES from Streptococcus constellatus.